The following is a 389-amino-acid chain: Succinate--CoA ligase [ADP-forming] subunit beta (389 aa).

The 236-residue stretch at 9–244 (KQLFADYGLP…PSQEDERERR (236 aa)) folds into the ATP-grasp domain. ATP contacts are provided by residues Lys46, 53–55 (GRG), Glu99, Thr102, and Glu107. Mg(2+) contacts are provided by Asn199 and Asp213. Residues Asn264 and 321 to 323 (GIV) contribute to the substrate site.

Belongs to the succinate/malate CoA ligase beta subunit family. In terms of assembly, heterotetramer of two alpha and two beta subunits. Requires Mg(2+) as cofactor.

It carries out the reaction succinate + ATP + CoA = succinyl-CoA + ADP + phosphate. It catalyses the reaction GTP + succinate + CoA = succinyl-CoA + GDP + phosphate. It participates in carbohydrate metabolism; tricarboxylic acid cycle; succinate from succinyl-CoA (ligase route): step 1/1. Its function is as follows. Succinyl-CoA synthetase functions in the citric acid cycle (TCA), coupling the hydrolysis of succinyl-CoA to the synthesis of either ATP or GTP and thus represents the only step of substrate-level phosphorylation in the TCA. The beta subunit provides nucleotide specificity of the enzyme and binds the substrate succinate, while the binding sites for coenzyme A and phosphate are found in the alpha subunit. The chain is Succinate--CoA ligase [ADP-forming] subunit beta from Alcanivorax borkumensis (strain ATCC 700651 / DSM 11573 / NCIMB 13689 / SK2).